Reading from the N-terminus, the 181-residue chain is Large ribosomal subunit protein uL5 (181 aa).

It belongs to the universal ribosomal protein uL5 family. Part of the 50S ribosomal subunit; part of the 5S rRNA/L5/L18/L25 subcomplex. Contacts the 5S rRNA and the P site tRNA. Forms a bridge to the 30S subunit in the 70S ribosome.

Its function is as follows. This is one of the proteins that bind and probably mediate the attachment of the 5S RNA into the large ribosomal subunit, where it forms part of the central protuberance. In the 70S ribosome it contacts protein S13 of the 30S subunit (bridge B1b), connecting the 2 subunits; this bridge is implicated in subunit movement. Contacts the P site tRNA; the 5S rRNA and some of its associated proteins might help stabilize positioning of ribosome-bound tRNAs. The sequence is that of Large ribosomal subunit protein uL5 from Aster yellows witches'-broom phytoplasma (strain AYWB).